We begin with the raw amino-acid sequence, 706 residues long: Dihydroxyacetone synthase (706 aa).

Thiamine diphosphate-binding positions include His-76 and 126-128; that span reads GPL. The Mg(2+) site is built by Asp-167, Asn-197, and Val-199. Thiamine diphosphate is bound at residue Asn-197. 3 residues coordinate thiamine diphosphate: His-273, Glu-431, and Phe-459. The Proton donor role is filled by Glu-431. The short motif at 704 to 706 is the Microbody targeting signal element; that stretch reads NHL.

Belongs to the transketolase family. Mg(2+) serves as cofactor. The cofactor is Ca(2+). Mn(2+) is required as a cofactor. It depends on Co(2+) as a cofactor. Requires thiamine diphosphate as cofactor.

It is found in the peroxisome. The catalysed reaction is D-xylulose 5-phosphate + formaldehyde = dihydroxyacetone + D-glyceraldehyde 3-phosphate. Its function is as follows. Involved in assimilation of formaldehyde. The protein is Dihydroxyacetone synthase (DAS1) of Candida boidinii (Yeast).